A 119-amino-acid polypeptide reads, in one-letter code: Ribonuclease P protein component (119 aa).

The protein belongs to the RnpA family. In terms of assembly, consists of a catalytic RNA component (M1 or rnpB) and a protein subunit.

The enzyme catalyses Endonucleolytic cleavage of RNA, removing 5'-extranucleotides from tRNA precursor.. In terms of biological role, RNaseP catalyzes the removal of the 5'-leader sequence from pre-tRNA to produce the mature 5'-terminus. It can also cleave other RNA substrates such as 4.5S RNA. The protein component plays an auxiliary but essential role in vivo by binding to the 5'-leader sequence and broadening the substrate specificity of the ribozyme. The chain is Ribonuclease P protein component from Nitrosomonas europaea (strain ATCC 19718 / CIP 103999 / KCTC 2705 / NBRC 14298).